A 922-amino-acid chain; its full sequence is Probable outer membrane protein pmp1 (922 aa).

A signal peptide spans 1–26 (MRFSLCGFPLVFSFTLLSVFDTSLSA). The 303-residue stretch at 620–922 (SLQTDRGLWI…NINCGSKFRF (303 aa)) folds into the Autotransporter domain.

It belongs to the PMP outer membrane protein family.

It is found in the secreted. It localises to the cell wall. The protein resides in the cell outer membrane. This Chlamydia pneumoniae (Chlamydophila pneumoniae) protein is Probable outer membrane protein pmp1 (pmp1).